Consider the following 475-residue polypeptide: Gelsolin-like protein 1 (475 aa).

Positions 1-131 (MGGTSLDPAL…GYRHVDDQFK (131 aa)) are actin binding, actin severing, Ca-sensitive. The tract at residues 1-239 (MGGTSLDPAL…VRKVSKGKDD (239 aa)) is necessary for barbed end capping activity. The Gelsolin-like 1 repeat unit spans residues 27-105 (FVLEPVPEVD…IQNYESPLFL (79 aa)). The interval 70–73 (DEIG) is actin-actin interfilament contact point. The interval 106–147 (SYFPDGIRYVSGGYESGYRHVDDQFKNWKPHLFHCKGKRNVR) is required for synapse elimination during development. The interval 133 to 227 (WKPHLFHCKG…STFWSYFGGV (95 aa)) is required for phosphatidylinositol 4,5-bisphosphate binding and regulation. Gelsolin-like repeat units lie at residues 148-208 (CTEV…KVHI), 275-341 (RKEQ…STQF), and 375-447 (EIAN…PPTF). The tract at residues 240-475 (DDNYWKRLTE…VQNMRRLLFH (236 aa)) is F- and G-actin binding, Ca-independent. An inhibitory for phosphatidylinositol 4,5-bisphosphate binding activity region spans residues 248-348 (TEQITLWKVS…TQFTQWFRDW (101 aa)).

The protein belongs to the villin/gelsolin family. Monomer. Binds to actin monomers and filaments. Post-translationally, cleavage by caspase ced-3 activates its actin-severing function and is required for the elimination of presynaptic components during development.

It is found in the cytoplasm. The protein localises to the cytoskeleton. Its function is as follows. Calcium-regulated, actin-modulating protein that binds to the plus (or barbed) ends of actin monomers or filaments, preventing monomer exchange (end-blocking or capping). Binds actin but does not nucleate actin polymerization, albeit slows down elongation by blocking the barbed ends. By promoting actin depolymerization, required for the elimination of presynaptic components downstream of the egl-1, ced-4 and ced-3 apoptotic pathway during larval development. This chain is Gelsolin-like protein 1, found in Caenorhabditis elegans.